The chain runs to 247 residues: Carboxy-S-adenosyl-L-methionine synthase (247 aa).

S-adenosyl-L-methionine is bound by residues Y40, 65–67 (GSS), 90–91 (DN), 122–123 (DI), N137, and R204.

This sequence belongs to the class I-like SAM-binding methyltransferase superfamily. Cx-SAM synthase family. As to quaternary structure, homodimer.

It carries out the reaction prephenate + S-adenosyl-L-methionine = carboxy-S-adenosyl-L-methionine + 3-phenylpyruvate + H2O. Functionally, catalyzes the conversion of S-adenosyl-L-methionine (SAM) to carboxy-S-adenosyl-L-methionine (Cx-SAM). The chain is Carboxy-S-adenosyl-L-methionine synthase from Pseudomonas fluorescens (strain SBW25).